The chain runs to 635 residues: Biosynthetic arginine decarboxylase (635 aa).

N6-(pyridoxal phosphate)lysine is present on Lys-100. Substrate is bound at residue 282–292 (IDIGGGLGVDY).

The protein belongs to the Orn/Lys/Arg decarboxylase class-II family. SpeA subfamily. Mg(2+) serves as cofactor. The cofactor is pyridoxal 5'-phosphate.

It carries out the reaction L-arginine + H(+) = agmatine + CO2. The protein operates within amine and polyamine biosynthesis; agmatine biosynthesis; agmatine from L-arginine: step 1/1. Catalyzes the biosynthesis of agmatine from arginine. The sequence is that of Biosynthetic arginine decarboxylase from Pelobacter propionicus (strain DSM 2379 / NBRC 103807 / OttBd1).